Consider the following 72-residue polypeptide: Protein Kish (72 aa).

An N-terminal signal peptide occupies residues 1 to 26 (MSALFNFRSLLQVILLLICSCSYVHG). The Lumenal portion of the chain corresponds to 27-53 (QWPSLLDRYKNHEVLGAFWKMARVGER). Residues 54–72 (ASPYVSLACILMAISQFNS) form a helical membrane-spanning segment.

Belongs to the KISH family.

It is found in the endoplasmic reticulum membrane. It localises to the golgi apparatus membrane. In terms of biological role, involved in the early part of the secretory pathway. The chain is Protein Kish from Saccharomyces cerevisiae (strain ATCC 204508 / S288c) (Baker's yeast).